A 244-amino-acid polypeptide reads, in one-letter code: Small ribosomal subunit protein uS3 (244 aa).

Residues 39 to 107 form the KH type-2 domain; the sequence is VREMLRKKLA…PAHINVTEVR (69 aa). The tract at residues 213 to 244 is disordered; the sequence is VGQEKQDDSPRNDRNDRGDRGDRPSRPAREAR. Positions 216–244 are enriched in basic and acidic residues; the sequence is EKQDDSPRNDRNDRGDRGDRPSRPAREAR.

This sequence belongs to the universal ribosomal protein uS3 family. As to quaternary structure, part of the 30S ribosomal subunit. Forms a tight complex with proteins S10 and S14.

Its function is as follows. Binds the lower part of the 30S subunit head. Binds mRNA in the 70S ribosome, positioning it for translation. This chain is Small ribosomal subunit protein uS3, found in Xanthomonas axonopodis pv. citri (strain 306).